An 89-amino-acid polypeptide reads, in one-letter code: Acylphosphatase (89 aa).

The region spanning 3-89 (QKHLQVFGTV…SEDFSDFKSI (87 aa)) is the Acylphosphatase-like domain. Residues arginine 18 and asparagine 36 contribute to the active site.

It belongs to the acylphosphatase family.

The enzyme catalyses an acyl phosphate + H2O = a carboxylate + phosphate + H(+). This chain is Acylphosphatase (acyP), found in Staphylococcus haemolyticus (strain JCSC1435).